A 109-amino-acid chain; its full sequence is Nucleoid-associated protein Plut_1285 (109 aa).

The protein belongs to the YbaB/EbfC family. In terms of assembly, homodimer.

It is found in the cytoplasm. It localises to the nucleoid. In terms of biological role, binds to DNA and alters its conformation. May be involved in regulation of gene expression, nucleoid organization and DNA protection. This Chlorobium luteolum (strain DSM 273 / BCRC 81028 / 2530) (Pelodictyon luteolum) protein is Nucleoid-associated protein Plut_1285.